A 1365-amino-acid polypeptide reads, in one-letter code: DNA-directed RNA polymerase subunit beta'' (1365 aa).

Residues C224, C295, C302, and C305 each coordinate Zn(2+).

Belongs to the RNA polymerase beta' chain family. RpoC2 subfamily. As to quaternary structure, in plastids the minimal PEP RNA polymerase catalytic core is composed of four subunits: alpha, beta, beta', and beta''. When a (nuclear-encoded) sigma factor is associated with the core the holoenzyme is formed, which can initiate transcription. It depends on Zn(2+) as a cofactor.

The protein resides in the plastid. It is found in the chloroplast. The catalysed reaction is RNA(n) + a ribonucleoside 5'-triphosphate = RNA(n+1) + diphosphate. DNA-dependent RNA polymerase catalyzes the transcription of DNA into RNA using the four ribonucleoside triphosphates as substrates. The chain is DNA-directed RNA polymerase subunit beta'' from Fagopyrum esculentum subsp. ancestrale (Wild buckwheat).